A 923-amino-acid chain; its full sequence is Inorganic phosphate transporter PHO87 (923 aa).

In terms of domain architecture, SPX spans 1–334; sequence MRFSHFLKYN…HMNTRQELIE (334 aa). Topologically, residues 1-461 are extracellular; sequence MRFSHFLKYN…KLFFGKRAMK (461 aa). Disordered stretches follow at residues 40–74 and 86–107; these read ETPT…SSSK and FGSK…IDGN. A compositionally biased stretch (basic and acidic residues) spans 95–104; that stretch reads KRGDSDEKAI. Lys-102 participates in a covalent cross-link: Glycyl lysine isopeptide (Lys-Gly) (interchain with G-Cter in ubiquitin). Asn-162, Asn-202, and Asn-274 each carry an N-linked (GlcNAc...) asparagine glycan. The chain crosses the membrane as a helical span at residues 462–482; the sequence is IGFIIIVTGVLLGVKTFNDPV. Residues 483-493 are Cytoplasmic-facing; that stretch reads EHRCMALVECC. The chain crosses the membrane as a helical span at residues 494–514; sequence AFLWASEAIPLHITGLLVPLL. Topologically, residues 515–537 are extracellular; the sequence is TVLFRVLKDDDGKVMGAAAASTE. A helical transmembrane segment spans residues 538–558; it reads ILGTMWSSTIMILLAGFTLGE. Residues 559–583 are Cytoplasmic-facing; that stretch reads ALSQYNVAKVLASWLLALAGTKPRN. A helical membrane pass occupies residues 584–604; that stretch reads VLLMAMSVVFFLSMWISNVAS. Over 605 to 627 the chain is Extracellular; that stretch reads PVLTYSLLTPLLDPLDYTSPFAK. The helical transmembrane segment at 628–648 threads the bilayer; the sequence is ALVMGVALSADIGGMASPISS. Over 649–667 the chain is Cytoplasmic; that stretch reads PQNIISMQYLKPYGIGWGQ. The chain crosses the membrane as a helical span at residues 668 to 688; that stretch reads FFAVALPTGILSMLCSWALMI. The Extracellular segment spans residues 689–707; sequence LTFKIGKTKLEKFKPIRTR. Residues 708 to 728 form a helical membrane-spanning segment; the sequence is FTIKQYFIIIVTIATILLWCV. At 729-735 the chain is on the cytoplasmic side; the sequence is ESQIESA. A helical transmembrane segment spans residues 736–756; it reads FGSSGEIAVIPIVLFFGTGLL. Residues 757–767 are Extracellular-facing; it reads STKDFNTFPWS. A helical membrane pass occupies residues 768-788; the sequence is IVVLAMGGIALGKAVSSSGLL. Over 789–802 the chain is Cytoplasmic; sequence VTIARALQKKIQND. Residues 803–823 traverse the membrane as a helical segment; sequence GVFAILCIFGILMLVVGTFVS. At 824–849 the chain is on the extracellular side; the sequence is HTVSAIIIIPLVQEVGDKLSDPKAAP. The helical transmembrane segment at 850–870 threads the bilayer; that stretch reads ILVFGCALLASCGMGLASSGF. Over 871 to 898 the chain is Cytoplasmic; the sequence is PNVTAISMTDKKGNRWLTVGAFISRGVP. The helical transmembrane segment at 899-919 threads the bilayer; the sequence is ASLLAFVCVITLGYGISSSVL. The Extracellular segment spans residues 920–923; that stretch reads KGST.

This sequence belongs to the CitM (TC 2.A.11) transporter family.

It localises to the membrane. Its function is as follows. Involved in the uptake of inorganic phosphate. This Saccharomyces cerevisiae (strain ATCC 204508 / S288c) (Baker's yeast) protein is Inorganic phosphate transporter PHO87 (PHO87).